Here is an 86-residue protein sequence, read N- to C-terminus: Conotoxin S6.10 (86 aa).

Positions 1–22 are cleaved as a signal peptide; that stretch reads MKLTCVLIIAVLFLTACQLATA. A propeptide spanning residues 23-45 is cleaved from the precursor; it reads KTYSKGRQKHRALRSTDKNIKLT. 3 cysteine pairs are disulfide-bonded: cysteine 48-cysteine 62, cysteine 55-cysteine 66, and cysteine 61-cysteine 73.

The protein belongs to the conotoxin O1 superfamily. Expressed by the venom duct.

Its subcellular location is the secreted. The polypeptide is Conotoxin S6.10 (Conus striatus (Striated cone)).